Reading from the N-terminus, the 252-residue chain is Ribosomal RNA small subunit methyltransferase A (252 aa).

S-adenosyl-L-methionine is bound by residues Asn11, Leu13, Gly38, Glu60, Asp82, and Asn99.

Belongs to the class I-like SAM-binding methyltransferase superfamily. rRNA adenine N(6)-methyltransferase family. RsmA subfamily.

It is found in the cytoplasm. The catalysed reaction is adenosine(1518)/adenosine(1519) in 16S rRNA + 4 S-adenosyl-L-methionine = N(6)-dimethyladenosine(1518)/N(6)-dimethyladenosine(1519) in 16S rRNA + 4 S-adenosyl-L-homocysteine + 4 H(+). Functionally, specifically dimethylates two adjacent adenosines (A1518 and A1519) in the loop of a conserved hairpin near the 3'-end of 16S rRNA in the 30S particle. May play a critical role in biogenesis of 30S subunits. The chain is Ribosomal RNA small subunit methyltransferase A from Hydrogenobaculum sp. (strain Y04AAS1).